Reading from the N-terminus, the 329-residue chain is Putative helicase 109L (329 aa).

In terms of domain architecture, Helicase ATP-binding spans Leu-105–Met-259. An ATP-binding site is contributed by Cys-118–Thr-125. Positions Asp-212–His-215 match the DEAH box motif.

It belongs to the DEAD box helicase family. DEAH subfamily.

The protein is Putative helicase 109L of Invertebrate iridescent virus 3 (IIV-3).